A 418-amino-acid polypeptide reads, in one-letter code: Zinc metalloproteinase-disintegrin-like batroxstatin-2 (418 aa).

The Peptidase M12B domain occupies 10–206; the sequence is KYVKLVLVAD…DMPQCILEKP (197 aa). Cystine bridges form between Cys121–Cys201, Cys161–Cys185, and Cys163–Cys168. His146 provides a ligand contact to Zn(2+). Glu147 is a catalytic residue. The Zn(2+) site is built by His150 and His156. One can recognise a Disintegrin domain in the interval 214–299; it reads PPVCGNYFVE…AECTDRFQRN (86 aa). Ca(2+) contacts are provided by Val216, Asn219, Phe221, Glu223, Glu226, and Asp229. Disulfide bonds link Cys217/Cys246, Cys228/Cys241, Cys230/Cys236, Cys240/Cys263, Cys254/Cys260, Cys259/Cys285, Cys272/Cys292, Cys279/Cys310, Cys303/Cys315, Cys322/Cys372, Cys337/Cys383, Cys350/Cys360, Cys367/Cys409, and Cys403/Cys414. A D/ECD-tripeptide motif is present at residues 278–280; it reads ECD. Positions 280, 281, 283, 294, and 295 each coordinate Ca(2+). An N-linked (GlcNAc...) asparagine glycan is attached at Asn312.

It belongs to the venom metalloproteinase (M12B) family. P-III subfamily. P-IIIc sub-subfamily. Homodimer; disulfide-linked. The cofactor is Zn(2+). In terms of tissue distribution, expressed by the venom gland.

Its subcellular location is the secreted. Snake venom zinc metalloprotease that induces apoptosis in vascular endothelial cells (VEC), without degrading the extracellular matrix (it cannot cleave collagen) or inhibiting adhesion of VEC. Has also fibrinogenolytic and hemorrhagic activities. The protein is Zinc metalloproteinase-disintegrin-like batroxstatin-2 of Bothrops atrox (Barba amarilla).